Here is a 164-residue protein sequence, read N- to C-terminus: Cytochrome c-type biogenesis protein CcmE (164 aa).

Residues 1-7 are Cytoplasmic-facing; sequence MTRKQRR. Residues 8–28 traverse the membrane as a helical; Signal-anchor for type II membrane protein segment; sequence LLMIGGAGVVLVVAVGLVLNA. The Periplasmic segment spans residues 29–164; sequence MRGSIVFFST…ASADAAGPSR (136 aa). Positions 122 and 126 each coordinate heme. Residues 137-149 show a composition bias toward basic and acidic residues; it reads KQGHWKDDYEKKP. Residues 137–164 form a disordered region; sequence KQGHWKDDYEKKPPGAPGASADAAGPSR. Low complexity predominate over residues 153 to 164; that stretch reads PGASADAAGPSR.

The protein belongs to the CcmE/CycJ family.

It localises to the cell inner membrane. In terms of biological role, heme chaperone required for the biogenesis of c-type cytochromes. Transiently binds heme delivered by CcmC and transfers the heme to apo-cytochromes in a process facilitated by CcmF and CcmH. The polypeptide is Cytochrome c-type biogenesis protein CcmE (Rhodopseudomonas palustris (strain BisB5)).